Reading from the N-terminus, the 109-residue chain is uncharacterized protein (109 aa).

2 consecutive transmembrane segments (helical) span residues 19-39 and 53-73; these read LELV…CLIP and YFID…FYPF.

The protein localises to the membrane. This is an uncharacterized protein from Saccharomyces cerevisiae (strain ATCC 204508 / S288c) (Baker's yeast).